The sequence spans 4083 residues: MTDDQVAQALVGYVFNVAKLFLKLGAEQDAFARTHGAKFEEWVGNGNMRTLFLVKDEEGEVQVLEELEGPEAEGPEQSGRLLLIKNRPFVDGSAPMESQVQVLHLPPRAHFDGFKSFVSFGVATMFDAVVSTNSNLEAKQESINSARRKIKDLSLSLQSLQQFIEVPDISATAHPLIKKIIAEGANPRNYTTYISDEQFADSQFLNSLQKIANGWIKSAQNLTKLTRNIEDGSATDEIRFWINLEQSLLALEKQIAIPEVEITLSILTAAKRFHATVTFISDTGLRDRILETQSYNQIMSDFPLADLQTATSFTKLGEAIESISIALKKLKVSTYPLARAVTFVEKISTELDQKLREMLPNLISSDFISFQEDYDHCIKIINQWEALLKEFTSLIRELMRKRSEKFIFMKIDTQTDSLKEVLNTVAAFRKKHDILIHVLKGIGYDTLSEDIQSIYEPVQYQDPLRDNASKWANAEAAYNQRVSLLENKLVDMLKKKLDDCKSSDSMFSIFEKYRPLMKRPRIQGAVREYQHELLHNVKDDLEHIHQQLSLQKWNSELSRLNDIPPVSASIIWSKQLTKKLQNLTSRLGLILGEDWISTSEGSQIFVECSSIMKVLNTDKLFETWVSNVSSQNFLLDEPIFKILITNEEYELHVNFDSVVGSLFKEVRNLMWMGFNVPSNIIKNSRRVRSLYPHAVMVSELLQTFVSAVQSFQERPHTWLLLKDETENIWQLLSAMITDTWDSVPLFEDDASHERAEDIQRDEPSILRLEHSIGELLSKFQQLDGLEKGLSSCLQQLEVFGKLDLQNLEVLINKIQLLVDQATLHGFHNMSGFIDYLNTRIRSYLVSTVSKILEESQLSPKKHYILQQGKKVTISPSIEETKKAWMRDFQKTLEVATNLPKITDKKFDITEGQMENFTDIGTDLSESLIKAFLRIEDACHAIDEHFQKWKKLELLWCLDELTLLERLGSDVEVSYRFLLDFMEERKAIDMVDSEITIAGDTMINNEQVYVRVSAKYDNWQRVLCEKLLENYMDHASEFDTQLVHSRRLLETSIINLGSLSKTTELIAYVDDIKNNLDLMFTRYSLLLNTQKLLQKLRFRIPQNFIHAEQIESDLVSLREICLRKEDLINKNRDAISNKLEAELLKIQEVANSLSQSWSKKKPLSVSIQPSEALSVLNTFEDSIAKVNTERELINRAAKILLVPIKLQNVLSPVIEEVNDYKAVWSSVDGLWNSFNATLSVKWADFESTAVKHRLEALMKKCQDMPPKVLQYKIFQNIAGSIEATLKSMHLLKALKEPAIKPRHWSILFKQLGASHIVSGNIDDQTFTLEDILQLNILLNEVSVKKIVIKARNENVLESSLSQMKARWRATKFDQFVHSSGLVLVKGWDVIFSNCNDDLNMITSMKNSPYFKVFEQEALEWETKLSNFYDIVLSWVEVQRQWMYLFGILAKKTEMKNLLPIEASKFASLTSEYNSLLLKLYGSEIAIDILHVHSTLPTLKRMAESLTKIRKSLNDFLETQRRLFPRFYFVGNEDLLQIIGAGDNFSEFSRHLSKLFSSVSDFIYDESLIQGVYSLEGETLLFANPVRVTPSSKLDQWMNEVDLEIKLTLSTLVKNCLESYRTSGSLKHIIEKYPFQALLLALQCTWTNKIETSMTKDNFGSICSSIDEEMASLAAVIDSYPTVTEKRKVESLIVELVHLKTITETLKNVELEQIDFHWKQTQRFYWDDNSNDPLNSITIEQSCVSFCYGFEYIGVPERLIYTPLLDSCFNAMVLALSEHMGGCPFGPAGTGKTETIKALGQNFGRMVLVFNCDDSFDFQAMSRLLFGITQVGAWGCFDEFNRLEEKILSAVSTQVEAIQLSLVQGKPEIEVLDKKGSLNSNTGIFITMNPGYAGRSELPENLKKMFREFAMMKPDALVIAEVILTILGLENPRVLAEKIVSLFKLLNDKTTSQKHYDFGLRALKSVLRNCLTILRSTTDLDSTQVLLRSLNEMVVPKLISVDEAVYEEAIADFFPGSRIKPSNEQLLSYLASYCESNQLVASDLFIKKCSQFYDIQKTQQAIILAGDAGTGKTSVWKSVINSMKRSGAKENIVYIIDTKTLKKEDLYGKLDPVTFDWKDGIFTHLLRKTLLDTMGNFKNSNIWIVFDSDLDPNYTETLNSVLDDNKVLTLPNGERLKIPPNLHILFEVQDLEHATAATVSRCGMIWFANNTLAAQDILISCLSREVATLQQDADVHDNIIATIQDIFAQFIQGSTLGNVIEATYKADHIMGVDFCRFIETAVTLLSCDIKKNKKQLSRLSQVACVRYMSKRLALVLIWAFVGGSDLETREKFSETICELLGISDIPTGSKFLLDYDVSVATQDWVPVSAEVPKTSLESHEVLIPDLIIPTVDTVRHETLLFDLLNADRPLILCGPPGSGKTMTLYNTLKRSDRFNIIGINFSKDTSVELFLKTLEQHTICTPTSRGIIMQPKAHGKQLVVFCDEINLPMLDEYGSQPVILFLRQLIEKRGFWNVQESKWVFIERIQIVGACNPPGHAGRVSITPRFLRHASIVMVDYPGQIAMEQIYETFFNAIFKLTPKLKGFASDFTKASLQVYYDCKATYTSEAHSHYIYSPRELTRWVRGIHFTISDSGNIDLAYMLELWAHESLRLFSDRLVSSSEKNIFQSILQNAITTHFPNQPLGSLESSQLLFSNWLSLNYSKVVKSEMYTFIKERLKTFAEEELDTELTIYDDMIDNILRIDRILKQVQGHGILVGPNYSGKTTITRFVAWMNGIKVVRPTIHRHFTIENFDEFLKQMLLRCGTESEKICLIIDESNILETSFLERMNTLLANSDVPGLFEADEYEALLSKIGQRISQLGLLLDTEQEMYDWFTSEISKNLHVIFNINDPDNRESTQLITSPALFNRSVINWIGTWSSRSCLHVVNEVIKNMPLDRADYTIPHHAAANLIVPDGNLVTIRDVVANLFVLFHEQYHRLLGNSQGSPSAFLTSLRRFQSLYMSKLKELEEHQRFTLVGLEKLKDTVIKVKQLNQSLSQKQVELQQKEKEARDTLDKMLVDQNEAERKQEASVEIQKILALQEKEINERRKIIMADLAVAEPAILEAQRGVKNIKKQQFTELRSMLNPPDAVKTTLEAVCVILGYSCKTWKDIQLAIRKDEFVTDIVYYNTETMMTPAMKQDIETDYLSRPKFNYESVNRASLACGPLYQWIVAQISYSEMLVKVTPLKEEMVKVENEMLQNKARLMAAGEMIKELQTSIESSKVSYSKLIREVEITKTEMESVQSKVERSIKLMESLTGEKERWIKNTEHFKDWNKNLIGNCFLSSLYESYCGPHDQSLRLKLFTIWSNTLAKFGIEYEPTYSFITDMVNPLTKVNWVACGLPDNELFVANFHIAMNSCHYPYVIDPSSTIVDTFANFYGRKMMITSFLDVGFVKQLENALRFGGCILIQDGEFFDPIISHLIAKEFKKAGGRLTVQIGDHEVDVSTSFQLIIHSKDPNSYMSSFVKTRMAVINFTVSKGSIEAQALQITLEKENPELQKQRTDLLKLNGEYKLHLRSLEDKLLESLNESDGSILENDSLISTLEQLKIESSEIAKKIEETNTVIVKVEDLVNEYNVLGEQSVLIFNLLESITQWHWFYQIPIEQFMECFSSIFATKTRENMTRSEHLLLALYEHVYMWFSHVFKDRDRMAFGILLFASYHHSRESKFFSEHFWKIIEGIASDTLGTVEHITDTKLEQLVAAANEKDYLKGLKSLLEFLPESSWHDSVPKYQNIIVACERGVDGTFKVQQLAQEMGKTVHSVALGSAESISMAEQDLIQYSGEGKWLLLQNLQMSHEWANTVLPKKLESIKANPDFRVFMTCGIQSKPLVVPLLSRSYKIAYEGEPGVLNTVCELWRTQSEELKNVKPVEKLHSKFILVWFHSIIMARCRLAPIGFTKKYDFHDGDFHAGSKFLDHIFEQSSNGKEHVDPDLVPWKLVSDTIGKIIYGGKVDDPADLDWCKRSARRMFSSDAYLNNFEVVQGLTVPIDRSSYSQYDKWFKSLDAAAERTTAWLELSDASALQNFYAHEARMICKKIIQTNGPTSLIH.

The stem stretch occupies residues 1–1745 (MTDDQVAQAL…TIEQSCVSFC (1745 aa)). 3 coiled-coil regions span residues 127–166 (DAVV…FIEV), 381–402 (INQW…MRKR), and 801–821 (KLDL…VDQA). 4 AAA regions span residues 1746–1967 (YGFE…VLRN), 2026–2265 (SYLA…YKAD), 2373–2622 (SLES…WVRG), and 2716–2980 (TFAE…GNSQ). ATP-binding positions include 1784-1791 (GPAGTGKT), 2064-2071 (GDAGTGKT), 2412-2419 (GPPGSGKT), and 2754-2761 (GPNYSGKT). Residues 2987 to 3294 (LTSLRRFQSL…RSIKLMESLT (308 aa)) form a stalk region. Coiled coils occupy residues 3015–3085 (LEKL…NERR), 3223–3302 (LKEE…RWIK), and 3527–3607 (LEKE…VEDL). AAA stretches follow at residues 3364-3592 (MVNP…EIAK) and 3748-3952 (LKSL…FLDH).

The protein belongs to the dynein heavy chain family. Consists of at least two heavy chains and a number of intermediate and light chains.

It is found in the cytoplasm. The protein localises to the cytoskeleton. Its function is as follows. Cytoplasmic dynein acts as a motor for the intracellular retrograde motility of vesicles and organelles along microtubules. Dynein has ATPase activity; the force-producing power stroke is thought to occur on release of ADP. Required to maintain uniform nuclear distribution in hyphae. May play an important role in the proper orientation of the mitotic spindle into the budding daughter cell yeast. Probably required for normal progression of the cell cycle. This chain is Dynein heavy chain, cytoplasmic (DYN1), found in Eremothecium gossypii (strain ATCC 10895 / CBS 109.51 / FGSC 9923 / NRRL Y-1056) (Yeast).